The chain runs to 208 residues: Uracil phosphoribosyltransferase (208 aa).

5-phospho-alpha-D-ribose 1-diphosphate is bound by residues Arg-77, Arg-102, and 129 to 137 (DPMLATGNS). Residues Ile-193 and 198-200 (GDA) each bind uracil. Position 199 (Asp-199) interacts with 5-phospho-alpha-D-ribose 1-diphosphate.

This sequence belongs to the UPRTase family. The cofactor is Mg(2+).

The enzyme catalyses UMP + diphosphate = 5-phospho-alpha-D-ribose 1-diphosphate + uracil. It functions in the pathway pyrimidine metabolism; UMP biosynthesis via salvage pathway; UMP from uracil: step 1/1. Allosterically activated by GTP. Functionally, catalyzes the conversion of uracil and 5-phospho-alpha-D-ribose 1-diphosphate (PRPP) to UMP and diphosphate. The sequence is that of Uracil phosphoribosyltransferase from Mycoplasmopsis pulmonis (strain UAB CTIP) (Mycoplasma pulmonis).